Consider the following 143-residue polypeptide: Regulator of ribonuclease activity B (143 aa).

Residues 113 to 143 (EDPNAEEDEYGDDGEFFDDEDEADFNNAKVH) form a disordered region. The span at 115–136 (PNAEEDEYGDDGEFFDDEDEAD) shows a compositional bias: acidic residues.

It belongs to the RraB family. In terms of assembly, interacts with the C-terminal region of Rne.

The protein localises to the cytoplasm. Its function is as follows. Globally modulates RNA abundance by binding to RNase E (Rne) and regulating its endonucleolytic activity. Can modulate Rne action in a substrate-dependent manner by altering the composition of the degradosome. This Haemophilus ducreyi (strain 35000HP / ATCC 700724) protein is Regulator of ribonuclease activity B.